The primary structure comprises 296 residues: 4-diphosphocytidyl-2-C-methyl-D-erythritol kinase (296 aa).

Lysine 11 is a catalytic residue. 96–106 (PVSSGLAGGSA) serves as a coordination point for ATP. Residue aspartate 136 is part of the active site.

It belongs to the GHMP kinase family. IspE subfamily.

It catalyses the reaction 4-CDP-2-C-methyl-D-erythritol + ATP = 4-CDP-2-C-methyl-D-erythritol 2-phosphate + ADP + H(+). Its pathway is isoprenoid biosynthesis; isopentenyl diphosphate biosynthesis via DXP pathway; isopentenyl diphosphate from 1-deoxy-D-xylulose 5-phosphate: step 3/6. Catalyzes the phosphorylation of the position 2 hydroxy group of 4-diphosphocytidyl-2C-methyl-D-erythritol. This Anaplasma phagocytophilum (strain HZ) protein is 4-diphosphocytidyl-2-C-methyl-D-erythritol kinase.